We begin with the raw amino-acid sequence, 358 residues long: Protein PXR1 (358 aa).

Disordered stretches follow at residues 1–26 and 146–342; these read MGLAAPKNRSKISNDPQNTTWANNTS and EVKT…KSAT. Positions 11 to 26 are enriched in polar residues; it reads KISNDPQNTTWANNTS. Residues 25-79 form the G-patch domain; sequence TSRFGHRILTSQGWQPGDSLGASDAAHAAHYTVASQSHIRVLLKDDNLGLGAKRG. Composition is skewed to basic and acidic residues over residues 146-171 and 199-217; these read EVKTETQAKVEVKSEPESDGAKEDDR and SMDLRDQAKKDIAAESSKD. The segment covering 218–227 has biased composition (basic residues); it reads KKGKKSKKDK. A compositionally biased stretch (acidic residues) spans 287–299; sequence DVEDLSSESEDES. The span at 300–315 shows a compositional bias: polar residues; it reads TPSASRPATGTSTPTV. Positions 328–339 are enriched in basic residues; it reads HSVRQKWIRSKK.

Belongs to the PINX1 family.

The protein resides in the nucleus. It is found in the nucleolus. Functionally, involved in rRNA-processing at A0, A1 and A2 sites and negatively regulates telomerase. The chain is Protein PXR1 (PXR1) from Phaeosphaeria nodorum (strain SN15 / ATCC MYA-4574 / FGSC 10173) (Glume blotch fungus).